A 188-amino-acid polypeptide reads, in one-letter code: Elongation factor P (188 aa).

Belongs to the elongation factor P family.

Its subcellular location is the cytoplasm. Its pathway is protein biosynthesis; polypeptide chain elongation. Involved in peptide bond synthesis. Stimulates efficient translation and peptide-bond synthesis on native or reconstituted 70S ribosomes in vitro. Probably functions indirectly by altering the affinity of the ribosome for aminoacyl-tRNA, thus increasing their reactivity as acceptors for peptidyl transferase. The sequence is that of Elongation factor P from Malacoplasma penetrans (strain HF-2) (Mycoplasma penetrans).